The sequence spans 405 residues: Aspartokinase (405 aa).

2 ACT domains span residues 267–344 (VSME…AKVS) and 345–405 (IVGV…QLDQ).

The protein belongs to the aspartokinase family.

It catalyses the reaction L-aspartate + ATP = 4-phospho-L-aspartate + ADP. The protein operates within amino-acid biosynthesis; L-lysine biosynthesis via DAP pathway; (S)-tetrahydrodipicolinate from L-aspartate: step 1/4. Its pathway is amino-acid biosynthesis; L-methionine biosynthesis via de novo pathway; L-homoserine from L-aspartate: step 1/3. It participates in amino-acid biosynthesis; L-threonine biosynthesis; L-threonine from L-aspartate: step 1/5. In Helicobacter pylori (strain ATCC 700392 / 26695) (Campylobacter pylori), this protein is Aspartokinase (lysC).